The following is a 276-amino-acid chain: Rhomboid protease GlpG (276 aa).

6 helical membrane-spanning segments follow: residues Gly94–Ile114, Ile142–Gly162, Leu169–Gln189, Phe192–Trp212, Leu229–Met249, and Ala250–Leu270. The active-site Nucleophile is the Ser201. Residue His254 is part of the active site.

Belongs to the peptidase S54 family.

It is found in the cell inner membrane. The catalysed reaction is Cleaves type-1 transmembrane domains using a catalytic dyad composed of serine and histidine that are contributed by different transmembrane domains.. Its function is as follows. Rhomboid-type serine protease that catalyzes intramembrane proteolysis. In Salmonella dublin (strain CT_02021853), this protein is Rhomboid protease GlpG.